A 153-amino-acid chain; its full sequence is Prostaglandin E synthase (153 aa).

Topologically, residues 1–13 (MTSLGLVMENSQV) are lumenal. A helical transmembrane segment spans residues 14-42 (LPAFLLCSTLLVIKMYAVAVITGQVRLRK). Arg-39 lines the glutathione pocket. At 43 to 61 (KAFANPEDALKRGGLQYCR) the chain is on the cytoplasmic side. A helical transmembrane segment spans residues 62 to 91 (SDPDVERCLRAHRNDMETIYPFLFLGFVYS). Residue 74 to 78 (RNDME) coordinates glutathione. Over 92 to 98 (FLGPNPL) the chain is Lumenal. The helical transmembrane segment at 99–120 (IAWIHFLVVLTGRVVHTVAYLG) threads the bilayer. Positions 114 and 118 each coordinate glutathione. Residues 121–124 (KMNP) are Cytoplasmic-facing. The helical transmembrane segment at 125-153 (RIRSGAYVLAQFACFSMALQILWEVAHHL) threads the bilayer. Position 127-131 (127-131 (RSGAY)) interacts with glutathione.

It belongs to the MAPEG family. It depends on glutathione as a cofactor.

The protein resides in the membrane. Its subcellular location is the cytoplasm. The protein localises to the perinuclear region. It carries out the reaction prostaglandin H2 = prostaglandin E2. The enzyme catalyses 2-glyceryl-prostaglandin H2 = 2-glyceryl-prostaglandin E2. It catalyses the reaction prostaglandin G2 = (15S)-15-hydroperoxy-prostaglandin E2. The catalysed reaction is 1-chloro-2,4-dinitrobenzene + glutathione = 2,4-dinitrophenyl-S-glutathione + chloride + H(+). It carries out the reaction (5S)-hydroperoxy-(6E,8Z,11Z,14Z)-eicosatetraenoate + 2 glutathione = (5S)-hydroxy-(6E,8Z,11Z,14Z)-eicosatetraenoate + glutathione disulfide + H2O. The protein operates within lipid metabolism; prostaglandin biosynthesis. Its activity is regulated as follows. Activity is increased following LPS stimulation and down-regulated by the anti-inflammatory glucocorticoid dexamethasone. Functionally, terminal enzyme of the cyclooxygenase (COX)-2-mediated prostaglandin E2 (PGE2) biosynthetic pathway. Catalyzes the glutathione-dependent oxidoreduction of prostaglandin endoperoxide H2 (PGH2) to prostaglandin E2 (PGE2) in response to inflammatory stimuli. Plays a key role in inflammation response, fever and pain. Also catalyzes the oxidoreduction of endocannabinoids into prostaglandin glycerol esters and PGG2 into 15-hydroperoxy-PGE2. In addition, displays low glutathione transferase and glutathione-dependent peroxidase activities, toward 1-chloro-2,4-dinitrobenzene and 5-hydroperoxyicosatetraenoic acid (5-HPETE), respectively. The sequence is that of Prostaglandin E synthase (Ptges) from Rattus norvegicus (Rat).